The sequence spans 636 residues: Chaperone protein DnaK (636 aa).

The residue at position 198 (Thr-198) is a Phosphothreonine; by autocatalysis. A disordered region spans residues 602-636; the sequence is QAEGAQPGGEAAGEASAKDEKVVDADFEEVKDDKK. Positions 626–636 are enriched in acidic residues; sequence ADFEEVKDDKK.

The protein belongs to the heat shock protein 70 family.

Its function is as follows. Acts as a chaperone. The polypeptide is Chaperone protein DnaK (Geobacter sulfurreducens (strain ATCC 51573 / DSM 12127 / PCA)).